Reading from the N-terminus, the 229-residue chain is MIRAIVTDIEGTTSDIRFVHNVLFPYARERLAGFVTAQQHAEPVKTILDNLRRETDAPAASTADLITTLFAFMDEDRKSTALKALQGIIWRDGYLNGDFTGHLYPDVLPALEQWKAQGIDLYVYSSGSVAAQKLLFGYSDEGDITHLFTGYFDTLVGAKREVQSYRNIAEHLGHAPGTILFLSDIHQELDAAEAAGLRTIQLVRGDRDPASHHPQVQRFDDIHPEQIPA.

A disordered region spans residues 207 to 229; the sequence is RDPASHHPQVQRFDDIHPEQIPA. Positions 218–229 are enriched in basic and acidic residues; sequence RFDDIHPEQIPA.

It belongs to the HAD-like hydrolase superfamily. MasA/MtnC family. In terms of assembly, monomer. It depends on Mg(2+) as a cofactor.

The catalysed reaction is 5-methylsulfanyl-2,3-dioxopentyl phosphate + H2O = 1,2-dihydroxy-5-(methylsulfanyl)pent-1-en-3-one + phosphate. The protein operates within amino-acid biosynthesis; L-methionine biosynthesis via salvage pathway; L-methionine from S-methyl-5-thio-alpha-D-ribose 1-phosphate: step 3/6. It participates in amino-acid biosynthesis; L-methionine biosynthesis via salvage pathway; L-methionine from S-methyl-5-thio-alpha-D-ribose 1-phosphate: step 4/6. Its function is as follows. Bifunctional enzyme that catalyzes the enolization of 2,3-diketo-5-methylthiopentyl-1-phosphate (DK-MTP-1-P) into the intermediate 2-hydroxy-3-keto-5-methylthiopentenyl-1-phosphate (HK-MTPenyl-1-P), which is then dephosphorylated to form the acireductone 1,2-dihydroxy-3-keto-5-methylthiopentene (DHK-MTPene). In Klebsiella pneumoniae subsp. pneumoniae (strain ATCC 700721 / MGH 78578), this protein is Enolase-phosphatase E1.